Consider the following 365-residue polypeptide: tRNA/tmRNA (uracil-C(5))-methyltransferase (365 aa).

Positions 189, 217, 222, 238, and 298 each coordinate S-adenosyl-L-methionine. Catalysis depends on Cys323, which acts as the Nucleophile. The active-site Proton acceptor is the Glu357.

The protein belongs to the class I-like SAM-binding methyltransferase superfamily. RNA M5U methyltransferase family. TrmA subfamily.

It carries out the reaction uridine(54) in tRNA + S-adenosyl-L-methionine = 5-methyluridine(54) in tRNA + S-adenosyl-L-homocysteine + H(+). The catalysed reaction is uridine(341) in tmRNA + S-adenosyl-L-methionine = 5-methyluridine(341) in tmRNA + S-adenosyl-L-homocysteine + H(+). Dual-specificity methyltransferase that catalyzes the formation of 5-methyluridine at position 54 (m5U54) in all tRNAs, and that of position 341 (m5U341) in tmRNA (transfer-mRNA). The sequence is that of tRNA/tmRNA (uracil-C(5))-methyltransferase from Proteus mirabilis (strain HI4320).